Reading from the N-terminus, the 381-residue chain is Gas vesicle protein C (381 aa).

A run of 7 repeats spans residues 22–59 (QAFA…NSTN), 60–84 (DAFR…ADRR), 85–122 (DAFD…DETH), 123–160 (EAFD…VSVQ), 161–192 (GEFN…KDVA), 193–232 (DAFL…ETTE), and 233–274 (EAFA…IPPI). A 7 X approximate tandem repeats region spans residues 22-274 (QAFAAYADEF…TETEVDIPPI (253 aa)). Positions 261–333 (AVTGTETEVD…EDDQFLDDET (73 aa)) are disordered. The segment covering 276-318 (DSVEPDGEDEDSKADDVEAEAEVETVEMEFGAEMDTEADEDVQ) has biased composition (acidic residues).

This sequence belongs to the halobacterial gas vesicle GvpC family. Post-translationally, detected as 2 slightly different sizes in vivo; the proteins appears larger in SDS-PAGE probably due to the acidic tail.

The protein localises to the gas vesicle. Confers stability, involved in shaping gas vesicles (GV), hollow, gas filled proteinaceous nanostructures found in some microorganisms. They allow positioning of halobacteria at the optimal depth for growth in the poorly aerated, shallow brine pools of their habitat. In terms of biological role, expression of a 9.5 kb mc-vac DNA fragment containing 2 divergently transcribed regions (gvpD-gvpE-gvpF-gvpG-gvpH-gvpI-gvpJ-gvpK-gvpL-gvpM and gvpA-gvpC-gvpN-gvpO) allows H.volcanii to produce gas vesicles. The chain is Gas vesicle protein C from Haloferax mediterranei (strain ATCC 33500 / DSM 1411 / JCM 8866 / NBRC 14739 / NCIMB 2177 / R-4) (Halobacterium mediterranei).